The primary structure comprises 431 residues: Asparagine--tRNA ligase (431 aa).

This sequence belongs to the class-II aminoacyl-tRNA synthetase family.

It is found in the cytoplasm. The enzyme catalyses tRNA(Asn) + L-asparagine + ATP = L-asparaginyl-tRNA(Asn) + AMP + diphosphate + H(+). The polypeptide is Asparagine--tRNA ligase (Thermococcus kodakarensis (strain ATCC BAA-918 / JCM 12380 / KOD1) (Pyrococcus kodakaraensis (strain KOD1))).